A 262-amino-acid chain; its full sequence is Phycoerythrobilin:ferredoxin oxidoreductase (262 aa).

Belongs to the HY2 family.

The catalysed reaction is (3Z)-phycoerythrobilin + oxidized 2[4Fe-4S]-[ferredoxin] = 15,16-dihydrobiliverdin + reduced 2[4Fe-4S]-[ferredoxin] + 2 H(+). Catalyzes the two-electron reduction of the C2 and C3(1) diene system of 15,16-dihydrobiliverdin. The sequence is that of Phycoerythrobilin:ferredoxin oxidoreductase from Synechococcus sp. (strain RCC307).